A 582-amino-acid chain; its full sequence is Solute carrier family 15 member 3 (582 aa).

A disordered region spans residues 1–20; sequence MSALRAEQQPSRSGERQPLV. The next 4 membrane-spanning stretches (helical) occupy residues 33–53, 77–97, 102–122, and 155–175; these read TAAA…FGVT, LLFL…ADVY, LAIS…LTTI, and PYCA…ASSV. An N-linked (GlcNAc...) asparagine glycan is attached at asparagine 178. A helical transmembrane segment spans residues 201 to 221; that stretch reads WFYWSINLGAILSLLVVAFIE. Residue asparagine 223 is glycosylated (N-linked (GlcNAc...) asparagine). 2 helical membrane-spanning segments follow: residues 232–252 and 312–332; these read IIVG…PVFI and FQVL…WMVY. N-linked (GlcNAc...) asparagine glycosylation is present at asparagine 357. 2 consecutive transmembrane segments (helical) span residues 371-391 and 409-429; these read IPEA…VPVK and LQKM…AGVL. N-linked (GlcNAc...) asparagine glycosylation occurs at asparagine 440. The next 3 helical transmembrane spans lie at 466–485, 498–518, and 541–561; these read YLLI…EFAY, GIFF…VALL, and LYFF…LWIA. N-linked (GlcNAc...) asparagine glycosylation is present at asparagine 575.

The protein belongs to the major facilitator superfamily. Proton-dependent oligopeptide transporter (POT/PTR) (TC 2.A.17) family. In terms of tissue distribution, abundant expression in lung, spleen and thymus, and detected faintly in brain, liver, adrenal gland and heart at protein level.

It localises to the lysosome membrane. Its subcellular location is the endosome membrane. The enzyme catalyses N-acetyl-D-muramoyl-L-alanyl-D-isoglutamine(out) + n H(+)(out) = N-acetyl-D-muramoyl-L-alanyl-D-isoglutamine(in) + n H(+)(in). The catalysed reaction is glycylglycylglycine(out) + n H(+)(out) = glycylglycylglycine(in) + n H(+)(in). It carries out the reaction carnosine(out) + n H(+)(out) = carnosine(in) + n H(+)(in). It catalyses the reaction L-histidine(out) + n H(+)(out) = L-histidine(in) + n H(+)(in). Proton-coupled amino-acid transporter that transports free histidine and certain di- and tripeptides, and is involved in innate immune response. Also able to transport carnosine. Involved in the detection of microbial pathogens by toll-like receptors (TLRs) and NOD-like receptors (NLRs), probably by mediating transport of bacterial peptidoglycans across the endolysosomal membrane: catalyzes the transport of certain bacterial peptidoglycans, such as muramyl dipeptide (MDP), the NOD2 ligand. The sequence is that of Solute carrier family 15 member 3 (Slc15a3) from Rattus norvegicus (Rat).